The sequence spans 2249 residues: MAFHWCDNNLHTTVFTPRDFQVELLATAYERNTIICLGHRSSKEFIALKLLQELSRRARRHGRVSVYLSCEVGTSTEPCSIYTMLTHLTDLRVWQEQPDMQIPFDHCWTDYHVSILRPEGFLYLLETRELLLSSVELIVLEDCHDSAVYQRIRPLFENHIMPAPPADRPRILGLAGPLHSAGCELQQLSAMLATLEQSVLCQIETASDIVTVLRYCSRPHEYIVQCAPFEMDELSLVLADVLNTHKSFLLDHRYDPYEIYGTDQFMDELKDIPDPKVDPLNVINSLLVVLHEMGPWCTQRAAHHFYQCNEKLKVKTPHERHYLLYCLVSTALIQLYSLCEHAFHRHLGSGSDSRQTIERYSSPKVRRLLQTLRCFKPEEVHTQADGLRRMRHQVDQADFNRLSHTLESKCRMVDQMDQPPTETRALVATLEQILHTTEDRQTNRSAARVTPTPTPAHAKPKPSSGANTAQPRTRRRVYTRRHHRDHNDGSDTLCALIYCNQNHTARVLFELLAEISRRDPDLKFLRCQYTTDRVADPTTEPKEAELEHRRQEEVLKRFRMHDCNVLIGTSVLEEGIDVPKCNLVVRWDPPTTYRSYVQCKGRARAAPAYHVILVAPSYKSPTVGSVQLTDRSHRYICATGDTTEADSDSDDSAMPNSSGSDPYTFGTARGTVKILNPEVFSKQPPTACDIKLQEIQDELPAAAQLDTSNSSDEAVSMSNTSPSESSTEQKSRRFQCELSSLTEPEDTSDTTAEIDTAHSLASTTKDLVHQMAQYREIEQMLLSKCANTEPPEQEQSEAERFSACLAAYRPKPHLLTGASVDLGSAIALVNKYCARLPSDTFTKLTALWRCTRNERAGVTLFQYTLRLPINSPLKHDIVGLPMPTQTLARRLAALQACVELHRIGELDDQLQPIGKEGFRALEPDWECFELEPEDEQIVQLSDEPRPGTTKRRQYYYKRIASEFCDCRPVAGAPCYLYFIQLTLQCPIPEEQNTRGRKIYPPEDAQQGFGILTTKRIPKLSAFSIFTRSGEVKVSLELAKERVILTSEQIVCINGFLNYTFTNVLRLQKFLMLFDPDSTENCVFIVPTVKAPAGGKHIDWQFLELIQANGNTMPRAVPDEERQAQPFDPQRFQDAVVMPWYRNQDQPQYFYVAEICPHLSPLSCFPGDNYRTFKHYYLVKYGLTIQNTSQPLLDVDHTSARLNFLTPRYVNRKGVALPTSSEETKRAKRENLEQKQILVPELCTVHPFPASLWRTAVCLPCILYRINGLLLADDIRKQVSADLGLGRQQIEDEDFEWPMLDFGWSLSEVLKKSRESKQKESLKDDTINGKDLADVEKKPTSEETQLDKDSKDDKVEKSAIELIIEGEEKLQEADDFIEIGTWSNDMADDIASFNQEDDDEDDAFHLPVLPANVKFCDQQTRYGSPTFWDVSNGESGFKGPKSSQNKQGGKGKAKGPAKPTFNYYDSDNSLGSSYDDDDNAGPLNYMHHNYSSDDDDVADDIDAGRIAFTSKNEAETIETAQEVEKRQKQLSIIQATNANERQYQQTKNLLIGFNFKHEDQKEPATIRYEESIAKLKTEIESGGMLVPHDQQLVLKRSDAAEAQVAKVSMMELLKQLLPYVNEDVLAKKLGDRRELLLSDLVELNADWVARHEQETYNVMGCGDSFDNYNDHHRLNLDEKQLKLQYERIEIEPPTSTKAITSAILPAGFSFDRQPDLVGHPGPSPSIILQALTMSNANDGINLERLETIGDSFLKYAITTYLYITYENVHEGKLSHLRSKQVANLNLYRLGRRKRLGEYMIATKFEPHDNWLPPCYYVPKELEKALIEAKIPTHHWKLADLLDIKNLSSVQICEMVREKADALGLEQNGGAQNGQLDDSNDSCNDFSCFIPYNLVSQHSIPDKSIADCVEALIGAYLIECGPRGALLFMAWLGVRVLPITRQLDGGNQEQRIPGSTKPNAENVVTVYGAWPTPRSPLLHFAPNATEELDQLLSGFEEFEESLGYKFRDRSYLLQAMTHASYTPNRLTDCYQRLEFLGDAVLDYLITRHLYEDPRQHSPGALTDLRSALVNNTIFASLAVRHGFHKFFRHLSPGLNDVIDRFVRIQQENGHCISEEYYLLSEEECDDAEDVEVPKALGDVFESIAGAIFLDSNMSLDVVWHVYSNMMSPEIEQFSNSVPKSPIRELLELEPETAKFGKPEKLADGRRVRVTVDVFCKGTFRGIGRNYRIAKCTAAKCALRQLKKQGLIAKKD.

An essential for miRNA substrate recognition region spans residues 1–371 (MAFHWCDNNL…SPKVRRLLQT (371 aa)). The interval 1 to 690 (MAFHWCDNNL…SKQPPTACDI (690 aa)) is important for interaction with loqs isoform PB (loqs-PB). The helicase domain stretch occupies residues 1 to 761 (MAFHWCDNNL…AEIDTAHSLA (761 aa)). The segment at 1–1042 (MAFHWCDNNL…VSLELAKERV (1042 aa)) is necessary for processing certain pre-miRNas, such as pre-let 7 and pre-bantam. 37-44 (LGHRSSKE) is a binding site for ATP. The tract at residues 371 to 491 (TLRCFKPEEV…HHRDHNDGSD (121 aa)) is dispensable for activity and substrate recognition. A disordered region spans residues 436–486 (TTEDRQTNRSAARVTPTPTPAHAKPKPSSGANTAQPRTRRRVYTRRHHRDH). The segment covering 472–484 (RTRRRVYTRRHHR) has biased composition (basic residues). In terms of domain architecture, Helicase C-terminal spans 485 to 648 (DHNDGSDTLC…TGDTTEADSD (164 aa)). The essential for miRNA substrate recognition stretch occupies residues 496 to 606 (LIYCNQNHTA…VQCKGRARAA (111 aa)). The dispensable for activity and substrate recognition stretch occupies residues 617 to 761 (SYKSPTVGSV…AEIDTAHSLA (145 aa)). 2 disordered regions span residues 640–665 (GDTTEADSDSDDSAMPNSSGSDPYTF) and 705–757 (LDTS…IDTA). The span at 716 to 726 (SMSNTSPSESS) shows a compositional bias: low complexity. A Dicer dsRNA-binding fold domain is found at 825–920 (AIALVNKYCA…QPIGKEGFRA (96 aa)). Positions 924–957 (DWECFELEPEDEQIVQLSDEPRPGTTKRRQYYYK) are wing domain. Positions 963-1108 (FCDCRPVAGA…WQFLELIQAN (146 aa)) are platform domain. A PAZ domain is found at 1100–1246 (QFLELIQANG…LVPELCTVHP (147 aa)). Residues 1147–2249 (QYFYVAEICP…KKQGLIAKKD (1103 aa)) form an essential for production of mature miRNAs from pre-miRNAs. Also important for proper formation of the siRISC complex but is dispensable for biogenesis of siRNAs region. The disordered stretch occupies residues 1314-1351 (ESKQKESLKDDTINGKDLADVEKKPTSEETQLDKDSKD). Phosphoserine is present on serine 1423. Positions 1426-1477 (FWDVSNGESGFKGPKSSQNKQGGKGKAKGPAKPTFNYYDSDNSLGSSYDDDD) are disordered. A compositionally biased stretch (low complexity) spans 1437 to 1446 (KGPKSSQNKQ). The span at 1462-1471 (YYDSDNSLGS) shows a compositional bias: polar residues. RNase III domains follow at residues 1698-1919 (ITSA…IECG) and 1993-2150 (FEEF…LDSN). Positions 1745 and 1749 each coordinate Mg(2+). Phosphoserine is present on residues serine 1877 and serine 1880. Mg(2+) contacts are provided by aspartate 1905, glutamate 1908, glutamate 2032, aspartate 2136, and glutamate 2139. The DRBM domain maps to 2175 to 2241 (VPKSPIRELL…AKCALRQLKK (67 aa)).

It belongs to the helicase family. Dicer subfamily. As to quaternary structure, component of the miRNA-directed RISC loading complex (miRLC), composed of at least Dcr-1, AGO1 and loqs, which processes pre-miRNAs and loads the resulting miRNAs into the Argonaute 1 (AGO1)-containing RNA-induced silencing complex (miRISC). Interacts (via helicase domain) with dicing cofactor loqs isoform-PB (loqs-PB) (via DRBM 3 domain); this interaction enhances processing of pre-miRNAs by increasing substrate binding affinity of the dicer. Also able to interact with loqs isoforms PA and PC, however the relevance of such interactions are unclear in vivo. Different regions of the Dcr-1-loqs-PB heterodimer collaborate to recognize, bind and position the pre-miRNA for Dcr-1 mediated cleavage. In the absence of authentic miRNA substrates, the heterodimer favors a closed, catalytically incompetent, conformation, whereas binding of authentic pre-miRNA substrates stabilizes the relatively rare open, catalytically competent, conformation of the heterodimer. During substrate recognition, the Dcr-1 PAZ domain and pre-miRNA interact with the DRBM 1 domain of loqs-PB, which likely contributes to substrate recognition and stabilization. At the miRNA binding stage, the Dcr-1 DRBM domain and loqs-PB DRBM domains then bind the pre-miRNA in tandem to form a tight 'belt' around the pre-miRNA stem, the pre-miRNA loop is docked in the loop-binding region formed by DUF283, DRBM and part of the N terminus of Dcr-1, and the loqs-PB DRBM 1 and the wing domain of Dcr-1 act together to bind the 5' and 3' pre-miRNA termini within the PAZ and platform domains of Dcr-1. These interactions between the proteins and their pre-miRNA substrate stabilize a distorted form of the pre-miRNA and position the scissile phosphodiester bonds of the pre-miRNA at the RNase III catalytic cleavage sites of Dcr-1. Following Dcr-1 mediated cleavage, the miRNA duplex remains bound to loqs-PB DRBM 1, which dissociates from the Dcr-1 RNase III 1 domain but remains in contact with the PAZ and wing domains, suggesting that the heterodimer presents the mature miRNA to Ago2 for loading into the RNA-induced silencing complex (miRISC). Interacts with AGO2 and Fmr1 to form a RNA-induced silencing complex (siRISC), a ribonucleoprotein (RNP) complex involved in translation regulation; other components of the complex are RpL5, RpL11, AGO2 and Rm62. Interacts with piwi and vas; these interactions occur in the polar granules. The cofactor is Mg(2+). Mn(2+) is required as a cofactor.

It is found in the cytoplasm. Its subcellular location is the cytosol. It catalyses the reaction Endonucleolytic cleavage to 5'-phosphomonoester.. Its activity is regulated as follows. Activity towards pre-miRNAs is not inhibited by inorganic phosphate. In terms of biological role, endoribonuclease which functions in microRNA- (miRNA) gene silencing and, independently of its ribonuclease III activity, also acts in the short interfering RNA- (siRNA) gene silencing pathway. Cleaves hairpin precursor miRNAs (pre-miRNA) to generate mature miRNAs (miRNAs) that are between twenty-one to twenty-four nucleotides in length and function in RNA silencing and post-transcriptional regulation of gene expression. Also functions in miRNA loading and assembly of the Argonaute 1 (AGO1)-containing RNA-induced silencing complex (miRISC), with the miRNAs serving as a guide to direct the miRISC to complementary RNAs to degrade them or prevent their translation. Independently of its catalytic activity, functions in the siRNA silencing pathway by promoting assembly of the siRNA-directed Argonaute 2 (AGO2)-containing RISC (siRISC). Required for the proper formation of a stable intermediate (R2) in siRISC assembly, which is formed from the R1 precursor complex (containing Dcr-2, R2D2 and the siRNA) and is used for assembly of the mature (R3) siRISC complex. It is not required for siRNA biogenesis. During embryogenesis, involved in germline fate determination. Post-transcriptionally regulates mei-P26 expression through the microRNA pathway, which in turn post-translationally regulates myc protein levels; involved in regulating cell and tissue growth. The protein is Endoribonuclease Dcr-1 of Drosophila melanogaster (Fruit fly).